A 211-amino-acid polypeptide reads, in one-letter code: Homeobox protein Rhox5 (211 aa).

The tract at residues 38–129 (FFQAGEGRDE…PLRRPGSTQR (92 aa)) is disordered. 2 stretches are compositionally biased toward gly residues: residues 52-62 (GQPGEGAVGTE) and 70-84 (GGEG…GPVG). The span at 102–119 (HEPVAEGTESVKSEDKQM) shows a compositional bias: basic and acidic residues. A DNA-binding region (homeobox; atypical) is located at residues 119–176 (MPLRRPGSTQRRLAELERILLSSGSSSGGRSLIDGWISVCPECRNWFKIRRAAYRRNR).

As to expression, highly expressed in placenta. Lower levels in testis, epididymis, ovary and skeletal muscle.

The protein resides in the nucleus. Functionally, transcription factor required for differentiation of embryonic stem cells (ESCs) into primordial germ cells. The sequence is that of Homeobox protein Rhox5 (Rhox5) from Rattus norvegicus (Rat).